The chain runs to 483 residues: Proline--tRNA ligase (483 aa).

The protein belongs to the class-II aminoacyl-tRNA synthetase family. ProS type 3 subfamily. As to quaternary structure, homodimer.

It localises to the cytoplasm. The enzyme catalyses tRNA(Pro) + L-proline + ATP = L-prolyl-tRNA(Pro) + AMP + diphosphate. Catalyzes the attachment of proline to tRNA(Pro) in a two-step reaction: proline is first activated by ATP to form Pro-AMP and then transferred to the acceptor end of tRNA(Pro). The protein is Proline--tRNA ligase of Sulfurisphaera tokodaii (strain DSM 16993 / JCM 10545 / NBRC 100140 / 7) (Sulfolobus tokodaii).